A 1352-amino-acid polypeptide reads, in one-letter code: Astrotactin-2 (1352 aa).

The tract at residues 1–31 is disordered; the sequence is MAAAGARRSPGRGLGLRGRPRLGFHPGPPPP. The signal sequence occupies residues 1–51; the sequence is MAAAGARRSPGRGLGLRGRPRLGFHPGPPPPPPPPLLLLFLLLLPPPPLLA. The Lumenal segment spans residues 52-218; the sequence is GATAAAASRE…IVEEQMHILH (167 aa). The N-linked (GlcNAc...) asparagine glycan is linked to Asn180. The chain crosses the membrane as a helical span at residues 219 to 239; sequence ISVMGGLIALLLLLLVFTVAL. At 240-447 the chain is on the cytoplasmic side; that stretch reads YAQRRWQKRR…KGLLKSPVNK (208 aa). Disordered regions lie at residues 308-327 and 375-421; these read EEEE…DEFG and TPVE…ADDE. Residues 383–392 are compositionally biased toward polar residues; it reads QPASRSSTSA. A helical transmembrane segment spans residues 448-468; sequence TALTLIAVSSCILAMVCGNQM. The Lumenal segment spans residues 469–1352; the sequence is SCPLTVKVTL…RNTYGETKGR (884 aa). EGF-like domains lie at 523–563, 664–708, and 712–764; these read VRDL…HLCV, PVRD…SGCY, and KGID…KSCL. Disulfide bonds link Cys527–Cys539, Cys535–Cys546, Cys548–Cys562, Cys668–Cys681, Cys675–Cys692, Cys694–Cys707, Cys716–Cys728, Cys724–Cys748, and Cys750–Cys763. Asn796 is a glycosylation site (N-linked (GlcNAc...) asparagine). 3 disulfide bridges follow: Cys838/Cys1000, Cys929/Cys990, and Cys996/Cys1003. Asn1033 is a glycosylation site (N-linked (GlcNAc...) asparagine). 5 disulfide bridges follow: Cys1049/Cys1060, Cys1062/Cys1075, Cys1149/Cys1171, Cys1203/Cys1290, and Cys1311/Cys1334. Positions 1079 to 1201 constitute a Fibronectin type-III domain; the sequence is PQPVLRLSPT…SELSTVTLRT (123 aa).

It belongs to the astrotactin family. Interacts with ASTN1; the interaction is not calcium-dependent. As to expression, detected in cerebellum granule neurons; not detected in astroglia (at protein level). Detected primarily in cerebellum, and at lower levels in brain cortex, olfactory bulb, hindbrain and hippocampus dentate gyrus. Between 6 and 10 days after birth, when granule cell migration occurs in the cerebellum, detected in granule cell precursors in the external germinal layer, the molecular layer, the internal granule layer and in Purkinje neurons. Detected in postmitotic neurons in adult cerebellum.

The protein resides in the membrane. The protein localises to the perikaryon. Its subcellular location is the cytoplasm. It localises to the cell cortex. It is found in the early endosome. The protein resides in the late endosome. The protein localises to the cytoplasmic vesicle. Its subcellular location is the clathrin-coated vesicle. Mediates recycling of the neuronal cell adhesion molecule ASTN1 to the anterior pole of the cell membrane in migrating neurons. Promotes ASTN1 internalization and intracellular transport of endocytosed ASTN1. Selectively binds inositol-4,5-bisphosphate, inositol-3,4,5-trisphosphate and inositol-1,3,4,5-tetrakisphosphate, suggesting it is recruited to membranes that contain lipids with a phosphoinositide headgroup. This is Astrotactin-2 (Astn2) from Mus musculus (Mouse).